The following is a 194-amino-acid chain: Protein GrpE 1 (194 aa).

The segment at 1-22 (MIHNEEEQLEKKIEKNQDPKIN) is disordered.

The protein belongs to the GrpE family. In terms of assembly, homodimer.

The protein resides in the cytoplasm. Its function is as follows. Participates actively in the response to hyperosmotic and heat shock by preventing the aggregation of stress-denatured proteins, in association with DnaK and GrpE. It is the nucleotide exchange factor for DnaK and may function as a thermosensor. Unfolded proteins bind initially to DnaJ; upon interaction with the DnaJ-bound protein, DnaK hydrolyzes its bound ATP, resulting in the formation of a stable complex. GrpE releases ADP from DnaK; ATP binding to DnaK triggers the release of the substrate protein, thus completing the reaction cycle. Several rounds of ATP-dependent interactions between DnaJ, DnaK and GrpE are required for fully efficient folding. The polypeptide is Protein GrpE 1 (Buchnera aphidicola subsp. Acyrthosiphon pisum (strain APS) (Acyrthosiphon pisum symbiotic bacterium)).